We begin with the raw amino-acid sequence, 207 residues long: ATP phosphoribosyltransferase (207 aa).

The protein belongs to the ATP phosphoribosyltransferase family. Short subfamily. Heteromultimer composed of HisG and HisZ subunits.

The protein localises to the cytoplasm. The enzyme catalyses 1-(5-phospho-beta-D-ribosyl)-ATP + diphosphate = 5-phospho-alpha-D-ribose 1-diphosphate + ATP. Its pathway is amino-acid biosynthesis; L-histidine biosynthesis; L-histidine from 5-phospho-alpha-D-ribose 1-diphosphate: step 1/9. Its function is as follows. Catalyzes the condensation of ATP and 5-phosphoribose 1-diphosphate to form N'-(5'-phosphoribosyl)-ATP (PR-ATP). Has a crucial role in the pathway because the rate of histidine biosynthesis seems to be controlled primarily by regulation of HisG enzymatic activity. This is ATP phosphoribosyltransferase (hisG) from Dictyoglomus turgidum (strain DSM 6724 / Z-1310).